The chain runs to 81 residues: Protein L83L (81 aa).

Positions Met-1 to Lys-28 are disordered. Over residues Ala-14 to Lys-28 the composition is skewed to basic and acidic residues.

Belongs to the asfivirus L83L family. Interacts with host IL1B.

It is found in the host cytoplasm. In terms of biological role, may subvert the host innate immune response by interacting with host IL1B and interfering with its function. The polypeptide is Protein L83L (African swine fever virus (isolate Tick/South Africa/Pretoriuskop Pr4/1996) (ASFV)).